The primary structure comprises 237 residues: UDP-2,3-diacylglucosamine hydrolase (237 aa).

Aspartate 8, histidine 10, aspartate 41, asparagine 78, and histidine 113 together coordinate Mn(2+). 78–79 (NR) provides a ligand contact to substrate. Substrate-binding residues include aspartate 121, serine 159, glutamine 164, and histidine 195. Residues histidine 195 and histidine 197 each contribute to the Mn(2+) site.

Belongs to the LpxH family. The cofactor is Mn(2+).

The protein resides in the cell inner membrane. The enzyme catalyses UDP-2-N,3-O-bis[(3R)-3-hydroxytetradecanoyl]-alpha-D-glucosamine + H2O = 2-N,3-O-bis[(3R)-3-hydroxytetradecanoyl]-alpha-D-glucosaminyl 1-phosphate + UMP + 2 H(+). It functions in the pathway glycolipid biosynthesis; lipid IV(A) biosynthesis; lipid IV(A) from (3R)-3-hydroxytetradecanoyl-[acyl-carrier-protein] and UDP-N-acetyl-alpha-D-glucosamine: step 4/6. Its function is as follows. Hydrolyzes the pyrophosphate bond of UDP-2,3-diacylglucosamine to yield 2,3-diacylglucosamine 1-phosphate (lipid X) and UMP by catalyzing the attack of water at the alpha-P atom. Involved in the biosynthesis of lipid A, a phosphorylated glycolipid that anchors the lipopolysaccharide to the outer membrane of the cell. This chain is UDP-2,3-diacylglucosamine hydrolase, found in Chromobacterium violaceum (strain ATCC 12472 / DSM 30191 / JCM 1249 / CCUG 213 / NBRC 12614 / NCIMB 9131 / NCTC 9757 / MK).